Reading from the N-terminus, the 653-residue chain is DUF21 domain-containing protein At1g55930, chloroplastic (653 aa).

A chloroplast-targeting transit peptide spans 1-72 (MELDLSVLGR…DFSHRCQFVV (72 aa)). 5 consecutive transmembrane segments (helical) span residues 103–123 (GIVLGAVVCGVLFYGCGKVLA), 157–177 (GLILAVLLGLSAFFSMAETSI), 208–228 (FLTTILIGTTVVNIAATALVT), 234–254 (IFGEAGVSAATGVMTVAILLL), and 280–300 (WLSLILYPVGRVVTYLSMGIL). The CNNM transmembrane domain maps to 149 to 335 (VLKVLREQGL…ELSGAIEEEE (187 aa)). CBS domains follow at residues 354-415 (MTPL…LLES) and 421-479 (MAHK…IFDE).

The protein resides in the plastid. Its subcellular location is the chloroplast membrane. This Arabidopsis thaliana (Mouse-ear cress) protein is DUF21 domain-containing protein At1g55930, chloroplastic (CBSDUFCH2).